The chain runs to 211 residues: NADH-quinone oxidoreductase subunit I 1 (211 aa).

4Fe-4S ferredoxin-type domains lie at L50–A80 and R96–E125. C60, C63, C66, C70, C105, C108, C111, and C115 together coordinate [4Fe-4S] cluster. A disordered region spans residues Q192–R211.

It belongs to the complex I 23 kDa subunit family. NDH-1 is composed of 14 different subunits. Subunits NuoA, H, J, K, L, M, N constitute the membrane sector of the complex. The cofactor is [4Fe-4S] cluster.

It is found in the cell membrane. It carries out the reaction a quinone + NADH + 5 H(+)(in) = a quinol + NAD(+) + 4 H(+)(out). In terms of biological role, NDH-1 shuttles electrons from NADH, via FMN and iron-sulfur (Fe-S) centers, to quinones in the respiratory chain. The immediate electron acceptor for the enzyme in this species is believed to be ubiquinone. Couples the redox reaction to proton translocation (for every two electrons transferred, four hydrogen ions are translocated across the cytoplasmic membrane), and thus conserves the redox energy in a proton gradient. The protein is NADH-quinone oxidoreductase subunit I 1 of Streptomyces coelicolor (strain ATCC BAA-471 / A3(2) / M145).